A 754-amino-acid chain; its full sequence is C2H2 finger domain transcription factor crzA (754 aa).

Disordered stretches follow at residues 1 to 51, 63 to 150, 187 to 227, 269 to 299, and 384 to 543; these read MASQ…TVTG, SFAN…FSDL, VHQQ…QGST, QGHR…FDGV, and GAEG…RVQK. The span at 30 to 44 shows a compositional bias: low complexity; it reads HQQQQQQQHQQHQGQ. Polar residues-rich tracts occupy residues 63–80 and 94–114; these read SFAN…SPSA and TPAS…QSYG. Low complexity predominate over residues 130–140; that stretch reads QQQSQQQHHQQ. Over residues 141–150 the composition is skewed to polar residues; it reads PSLDDNFSDL. The span at 189 to 209 shows a compositional bias: low complexity; the sequence is QQSHPTQIPSSHSSTSPQISP. Composition is skewed to polar residues over residues 210 to 227 and 279 to 293; these read LEQQ…QGST and SEIS…LSQH. Low complexity-rich tracts occupy residues 459 to 472 and 491 to 515; these read STSR…SSSL and RQQQ…STSS. C2H2-type zinc fingers lie at residues 548 to 570 and 576 to 598; these read FQCN…LRTH and FVCT…EGLH. A C2H2-type 3; degenerate zinc finger spans residues 604–635; it reads FVCQGELSRGGQWGCGRRFARADALGRHFRSE. The segment at 708 to 737 is disordered; that stretch reads ADDPSDIGGRSSFDASSGNEFGFEDDDSGL.

Its subcellular location is the nucleus. The protein localises to the cytoplasm. Transcription factor involved in the regulation of calcium ion homeostasis. Regulates genes encoding calcium transporters, transcription factors and genes that could be directly or indirectly involved in calcium metabolism. Supports especially pmcA, pmcB and pmcC expression encoding for calcium-translocating P-type ATPases. Binds target promoters at motif A[GT][CG]CA[AC][AG]. Plays an essential role germination, radial growth, and asexual development. Also plays a major role in proper chitin and glucan incorporation into the cell wall. Involved in the high-osmolarity glycerol response (HOG) signaling pathway. Required for pathogenicity in an experimental murine model of invasive pulmonary aspergillosis. The polypeptide is C2H2 finger domain transcription factor crzA (Aspergillus fumigatus (strain ATCC MYA-4609 / CBS 101355 / FGSC A1100 / Af293) (Neosartorya fumigata)).